The following is a 243-amino-acid chain: MILFPAIDLKDGQCVRLKLGDMDQAIIYNEDPAAQAKAFEDQGFEWLHVVDLNGAFAGESVNGTAVEAILKATKNPVQLGGGIRTLAHIENWLSRGLRRVILGTVAVRDPALVMEACKAFPGQVAVGIDAKGGKVAVEGWAEASRLGVIELAKKFEGAGVAAIIYTDIDRDGVLAGINWDSTLALAEAVSIPVIASGGLASMEDIRRLATPEMRKLEGAISGRALYDGRIDPAEALSVLRAAA.

Aspartate 8 serves as the catalytic Proton acceptor. Aspartate 129 functions as the Proton donor in the catalytic mechanism.

Belongs to the HisA/HisF family.

The protein resides in the cytoplasm. The enzyme catalyses 1-(5-phospho-beta-D-ribosyl)-5-[(5-phospho-beta-D-ribosylamino)methylideneamino]imidazole-4-carboxamide = 5-[(5-phospho-1-deoxy-D-ribulos-1-ylimino)methylamino]-1-(5-phospho-beta-D-ribosyl)imidazole-4-carboxamide. It functions in the pathway amino-acid biosynthesis; L-histidine biosynthesis; L-histidine from 5-phospho-alpha-D-ribose 1-diphosphate: step 4/9. This Brucella suis biovar 1 (strain 1330) protein is 1-(5-phosphoribosyl)-5-[(5-phosphoribosylamino)methylideneamino] imidazole-4-carboxamide isomerase.